Reading from the N-terminus, the 170-residue chain is Large ribosomal subunit protein uL6m (170 aa).

It belongs to the universal ribosomal protein uL6 family.

Its subcellular location is the mitochondrion. The chain is Large ribosomal subunit protein uL6m (mrpl6) from Dictyostelium discoideum (Social amoeba).